Consider the following 676-residue polypeptide: Probable ERAD-associated E3 ubiquitin-protein ligase ASI1 (676 aa).

The Perinuclear space segment spans residues 1-78 (MSTNILQHVK…TLQLAKVGIR (78 aa)). Residues N24, N34, N46, and N66 are each glycosylated (N-linked (GlcNAc...) asparagine). A helical membrane pass occupies residues 79–99 (MFFSYSVSKYAVLCFSTAIIL). Topologically, residues 100-126 (NRLTVMSSLRSNSTNIRLPLWSKTLLH) are nuclear. The helical transmembrane segment at 127–147 (LVATLSLVKALLQILSQFGLM) threads the bilayer. At 148–156 (HELHVSDTD) the chain is on the perinuclear space side. The chain crosses the membrane as a helical span at residues 157–177 (FYALSVYLFVALSDCIEIFIS). Residues 178–181 (STTN) lie on the Nuclear side of the membrane. A helical membrane pass occupies residues 182-202 (VPSLICSDFSIWGLSLNLYII). Topologically, residues 203 to 277 (SKMPAGQQHI…NICLIHNYFP (75 aa)) are perinuclear space. Residues 278–298 (GFFYISTILLASIGIFLKALF) traverse the membrane as a helical segment. The Nuclear portion of the chain corresponds to 299–676 (TSNPFRSLYS…VKGYSKLNIV (378 aa)). The RING-type; atypical zinc finger occupies 624-664 (CLICKVNKRNIVTWPCRCLALCDDCRISLGYKGFATCVSCD).

Component of the Asi complex, which contains ASI1, ASI2 and ASI3. Interacts directly with ASI1.

The protein resides in the nucleus inner membrane. The enzyme catalyses S-ubiquitinyl-[E2 ubiquitin-conjugating enzyme]-L-cysteine + [acceptor protein]-L-lysine = [E2 ubiquitin-conjugating enzyme]-L-cysteine + N(6)-ubiquitinyl-[acceptor protein]-L-lysine.. Functionally, part of the nuclear inner membrane (INM)-specific branch of the ER-associated degradation (ERAD) pathway, required for the elimination of misfolded proteins in the INM, a specialized ER subdomain. Required for ERG11 degradation. Negative regulator of SPS-sensor signaling. Together with ASI2 and ASI3, prevents the unprocessed precursor forms of STP1 and STP2 that escape cytoplasmic anchoring from inducing SPS-sensor-regulated genes in the absence of inducing signals. Controls amino acid permease (AAP) gene expression in response to amino acid availability, a process mediated by the transcription factors STP1 and STP1. The sequence is that of Probable ERAD-associated E3 ubiquitin-protein ligase ASI1 (ASI3) from Saccharomyces cerevisiae (strain ATCC 204508 / S288c) (Baker's yeast).